We begin with the raw amino-acid sequence, 396 residues long: DNA-directed RNA polymerase subunit 6 (396 aa).

Disordered regions lie at residues 1–137 and 290–396; these read MSSK…DIED and NQQK…DYSE. Composition is skewed to acidic residues over residues 21-53, 76-88, and 97-137; these read EYYD…DDEN, IDPD…DTDG, and EMGE…DIED. Polar residues predominate over residues 290-312; it reads NQQKNSTTDTETLSTQENASTRV. 2 stretches are compositionally biased toward low complexity: residues 313 to 338 and 346 to 366; these read SGSN…SKSN and NSRT…SRTG. The segment covering 367 to 380 has biased composition (basic residues); sequence SKSKKSSNTKSKSK. A compositionally biased stretch (acidic residues) spans 385 to 396; that stretch reads NSDDSDYSDYSE.

It belongs to the archaeal Rpo6/eukaryotic RPB6 RNA polymerase subunit family.

The catalysed reaction is RNA(n) + a ribonucleoside 5'-triphosphate = RNA(n+1) + diphosphate. In terms of biological role, DNA-dependent RNA polymerase catalyzes the transcription of DNA into RNA using the four ribonucleoside triphosphates as substrates. The sequence is that of DNA-directed RNA polymerase subunit 6 from Acanthamoeba polyphaga (Amoeba).